An 864-amino-acid chain; its full sequence is Seed linoleate 9S-lipoxygenase-2 (864 aa).

In terms of domain architecture, PLAT spans Ser46 to Ala171. Positions Ser174 to Ile864 constitute a Lipoxygenase domain. Residues Pro230–Thr264 are disordered. The span at Thr251–Thr264 shows a compositional bias: basic and acidic residues. Residues His524, His529, His716, Asn720, and Ile864 each coordinate Fe cation.

The protein belongs to the lipoxygenase family. Fe cation serves as cofactor.

It localises to the cytoplasm. It catalyses the reaction (9Z,12Z)-octadecadienoate + O2 = (9S)-hydroperoxy-(10E,12Z)-octadecadienoate. The protein operates within lipid metabolism; oxylipin biosynthesis. Its function is as follows. Plant lipoxygenase may be involved in a number of diverse aspects of plant physiology including growth and development, pest resistance, and senescence or responses to wounding. It catalyzes the hydroperoxidation of lipids containing a cis,cis-1,4-pentadiene structure. The chain is Seed linoleate 9S-lipoxygenase-2 (LOX1.2) from Pisum sativum (Garden pea).